A 241-amino-acid chain; its full sequence is Sugar fermentation stimulation protein homolog (241 aa).

Belongs to the SfsA family.

The protein is Sugar fermentation stimulation protein homolog of Nostoc punctiforme (strain ATCC 29133 / PCC 73102).